A 160-amino-acid chain; its full sequence is Phosphopantetheine adenylyltransferase (160 aa).

Thr-9 is a substrate binding site. ATP-binding positions include 9 to 10 (TF) and His-17. The substrate site is built by Lys-41, Leu-73, and Arg-87. ATP-binding positions include 88–90 (GLR), Glu-98, and 123–129 (YSFLSSS).

Belongs to the bacterial CoaD family. In terms of assembly, homohexamer. Mg(2+) serves as cofactor.

Its subcellular location is the cytoplasm. It carries out the reaction (R)-4'-phosphopantetheine + ATP + H(+) = 3'-dephospho-CoA + diphosphate. The protein operates within cofactor biosynthesis; coenzyme A biosynthesis; CoA from (R)-pantothenate: step 4/5. Its function is as follows. Reversibly transfers an adenylyl group from ATP to 4'-phosphopantetheine, yielding dephospho-CoA (dPCoA) and pyrophosphate. This chain is Phosphopantetheine adenylyltransferase, found in Moorella thermoacetica (strain ATCC 39073 / JCM 9320).